Here is a 607-residue protein sequence, read N- to C-terminus: DNA mismatch repair protein MutL (607 aa).

This sequence belongs to the DNA mismatch repair MutL/HexB family.

Functionally, this protein is involved in the repair of mismatches in DNA. It is required for dam-dependent methyl-directed DNA mismatch repair. May act as a 'molecular matchmaker', a protein that promotes the formation of a stable complex between two or more DNA-binding proteins in an ATP-dependent manner without itself being part of a final effector complex. The polypeptide is DNA mismatch repair protein MutL (Anaeromyxobacter dehalogenans (strain 2CP-1 / ATCC BAA-258)).